We begin with the raw amino-acid sequence, 268 residues long: Energy-coupling factor transporter transmembrane protein EcfT (268 aa).

5 helical membrane passes run Ile26–Trp46, Ile72–Ile92, Ile106–Leu126, Ile149–Leu169, and Val247–His267.

The protein belongs to the energy-coupling factor EcfT family. As to quaternary structure, forms a stable energy-coupling factor (ECF) transporter complex composed of 2 membrane-embedded substrate-binding proteins (S component), 2 ATP-binding proteins (A component) and 2 transmembrane proteins (T component). May be able to interact with more than 1 S component at a time.

The protein localises to the cell membrane. Transmembrane (T) component of an energy-coupling factor (ECF) ABC-transporter complex. Unlike classic ABC transporters this ECF transporter provides the energy necessary to transport a number of different substrates. In Leuconostoc gelidum subsp. gasicomitatum (strain DSM 15947 / CCUG 46042 / CECT 5767 / JCM 12535 / LMG 18811 / NBRC 113245 / TB1-10) (Leuconostoc gasicomitatum), this protein is Energy-coupling factor transporter transmembrane protein EcfT.